Reading from the N-terminus, the 310-residue chain is Methionyl-tRNA formyltransferase (310 aa).

110–113 (SLLP) contacts (6S)-5,6,7,8-tetrahydrofolate.

This sequence belongs to the Fmt family.

The enzyme catalyses L-methionyl-tRNA(fMet) + (6R)-10-formyltetrahydrofolate = N-formyl-L-methionyl-tRNA(fMet) + (6S)-5,6,7,8-tetrahydrofolate + H(+). Attaches a formyl group to the free amino group of methionyl-tRNA(fMet). The formyl group appears to play a dual role in the initiator identity of N-formylmethionyl-tRNA by promoting its recognition by IF2 and preventing the misappropriation of this tRNA by the elongation apparatus. The protein is Methionyl-tRNA formyltransferase of Streptomyces avermitilis (strain ATCC 31267 / DSM 46492 / JCM 5070 / NBRC 14893 / NCIMB 12804 / NRRL 8165 / MA-4680).